Here is a 210-residue protein sequence, read N- to C-terminus: Homeobox protein Rhox5 (210 aa).

The interval 1–119 is disordered; the sequence is MEAEGSSRKV…GNPGGRQMPL (119 aa). The span at 17–30 shows a compositional bias: basic and acidic residues; sequence GVKEDSEEQHDVKA. Residues 47 to 79 are compositionally biased toward gly residues; it reads GQPGVGAVGTEGEGEELNGGKGHFGPGAPGPMG. The homeobox; atypical DNA-binding region spans 117 to 175; sequence MPLQGSRFAQHRLRELESILQRTNSFDVPREDLDRLMDACVSRVQNWFKIRRAAARRTR.

Its subcellular location is the nucleus. Functionally, transcription factor required for differentiation of embryonic stem cells (ESCs) into primordial germ cells. The sequence is that of Homeobox protein Rhox5 (Rhox5) from Mus musculus (Mouse).